We begin with the raw amino-acid sequence, 347 residues long: Heat-inducible transcription repressor HrcA (347 aa).

This sequence belongs to the HrcA family.

In terms of biological role, negative regulator of class I heat shock genes (grpE-dnaK-dnaJ and groELS operons). Prevents heat-shock induction of these operons. The chain is Heat-inducible transcription repressor HrcA from Lactococcus lactis subsp. cremoris (strain SK11).